The following is an 899-amino-acid chain: Core protein VP3 (899 aa).

The disordered stretch occupies residues 1–21 (MADPPDANVPKTSPYLKGDEL).

Belongs to the orbivirus VP3 family.

It is found in the virion. The VP3 protein is one of the five proteins (with VP1, VP4, VP6 and VP7) which form the inner capsid of the virus. The polypeptide is Core protein VP3 (Segment-3) (Epizootic hemorrhagic disease virus 1 (EHDV-1)).